The sequence spans 159 residues: Nucleoside diphosphate kinase (159 aa).

Residues Lys-13, Phe-61, Arg-89, Thr-95, Arg-106, and Asn-116 each contribute to the ATP site. His-119 (pros-phosphohistidine intermediate) is an active-site residue.

It belongs to the NDK family. The cofactor is Mg(2+).

The protein localises to the cytoplasm. It catalyses the reaction a 2'-deoxyribonucleoside 5'-diphosphate + ATP = a 2'-deoxyribonucleoside 5'-triphosphate + ADP. The enzyme catalyses a ribonucleoside 5'-diphosphate + ATP = a ribonucleoside 5'-triphosphate + ADP. Functionally, major role in the synthesis of nucleoside triphosphates other than ATP. The ATP gamma phosphate is transferred to the NDP beta phosphate via a ping-pong mechanism, using a phosphorylated active-site intermediate. The polypeptide is Nucleoside diphosphate kinase (Halorubrum lacusprofundi (strain ATCC 49239 / DSM 5036 / JCM 8891 / ACAM 34)).